A 332-amino-acid polypeptide reads, in one-letter code: uncharacterized protein (332 aa).

The tract at residues 159 to 256 is disordered; sequence PLEISGRGGN…PRPHPWGPGP (98 aa). The span at 201–231 shows a compositional bias: pro residues; it reads RPPSPRPPSPRPPHPRPPSPRPPHPRPPSPR.

The protein localises to the virion. This is an uncharacterized protein from Acanthamoeba polyphaga (Amoeba).